The primary structure comprises 278 residues: Putative phosphatase MG265 (278 aa).

Asp9 serves as the catalytic Nucleophile. Position 9 (Asp9) interacts with Mg(2+). Leu10 is a binding site for phosphate. Asp11 is a binding site for Mg(2+). Residues 43–44 (SG) and Lys204 contribute to the phosphate site. Mg(2+) is bound at residue Asp227. Phosphate is bound at residue Asn230.

Belongs to the HAD-like hydrolase superfamily. Cof family. The cofactor is Mg(2+).

The polypeptide is Putative phosphatase MG265 (Mycoplasma genitalium (strain ATCC 33530 / DSM 19775 / NCTC 10195 / G37) (Mycoplasmoides genitalium)).